Consider the following 343-residue polypeptide: Cell cycle control protein 50C (343 aa).

Topologically, residues 1–34 (MKRKCQDYESRLPDNTAVKQQQLPAFRLQLTASE) are cytoplasmic. A helical transmembrane segment spans residues 35-55 (ILSGFFAIGLFCLGMGIILLL). The Extracellular segment spans residues 56–306 (SAKSIKEVEI…STLTWSGGSS (251 aa)). N66, N164, N205, and N265 each carry an N-linked (GlcNAc...) asparagine glycan. Residues 307–327 (LFLALAYLVTGAVTLLASFSM) form a helical membrane-spanning segment. Residues 328-343 (MALHLKLKERKTFFLQ) are Cytoplasmic-facing.

Belongs to the CDC50/LEM3 family.

It is found in the membrane. This chain is Cell cycle control protein 50C (TMEM30C), found in Bos taurus (Bovine).